Here is a 213-residue protein sequence, read N- to C-terminus: Superoxide dismutase [Fe] (213 aa).

Residues H28, H82, D164, and H168 each contribute to the Fe cation site.

This sequence belongs to the iron/manganese superoxide dismutase family. As to quaternary structure, homotetramer. Requires Fe cation as cofactor.

It catalyses the reaction 2 superoxide + 2 H(+) = H2O2 + O2. Its function is as follows. Destroys superoxide anion radicals which are normally produced within the cells and which are toxic to biological systems. The polypeptide is Superoxide dismutase [Fe] (sodB) (Aquifex aeolicus (strain VF5)).